A 157-amino-acid chain; its full sequence is Ribosome maturation factor RimP (157 aa).

The protein belongs to the RimP family.

It is found in the cytoplasm. Functionally, required for maturation of 30S ribosomal subunits. The polypeptide is Ribosome maturation factor RimP (Lactococcus lactis subsp. cremoris (strain MG1363)).